Reading from the N-terminus, the 423-residue chain is Glucose-1-phosphate adenylyltransferase (423 aa).

Alpha-D-glucose 1-phosphate-binding positions include Tyr108, Gly173, 188–189, and Ser207; that span reads EK.

This sequence belongs to the bacterial/plant glucose-1-phosphate adenylyltransferase family. As to quaternary structure, homotetramer.

It catalyses the reaction alpha-D-glucose 1-phosphate + ATP + H(+) = ADP-alpha-D-glucose + diphosphate. The protein operates within glycan biosynthesis; glycogen biosynthesis. Functionally, involved in the biosynthesis of ADP-glucose, a building block required for the elongation reactions to produce glycogen. Catalyzes the reaction between ATP and alpha-D-glucose 1-phosphate (G1P) to produce pyrophosphate and ADP-Glc. This Francisella tularensis subsp. holarctica (strain FTNF002-00 / FTA) protein is Glucose-1-phosphate adenylyltransferase.